The chain runs to 60 residues: Large ribosomal subunit protein uL30 (60 aa).

It belongs to the universal ribosomal protein uL30 family. As to quaternary structure, part of the 50S ribosomal subunit.

The chain is Large ribosomal subunit protein uL30 from Shewanella sp. (strain ANA-3).